Here is a 476-residue protein sequence, read N- to C-terminus: MAKEQVQAITKMEEDFAQWYTDIVKKAELVDYSSVKGCMILRPYGYALWENMQKVMDEKLKATGHENVYMPMFIPESLLQKEKDHVEGFAPEVAWVTHGGDEKLAERLCIRPTSETLFCEHFSKIVQSYNDLPKLYNQWCSVVRWEKTTRPFLRTTEFLWQEGHTIHETAEESQAETLNILNLYASFCEDYLAIPVIKGQKTEKEKFAGAKATYTIESLMHDGKALQTGTSHNFGTNFSEAFDIKFLDRNGKWQYVHQTSWGVSARMIGGLIMVHSDNNGLVMPPKVAPVQVVIVPIAQHKEGVLAKATELQEHIQKVARVKIDASNKTPGWKFNEYEMKGIPIRLEVGPKDIEKNQVVLVRRDTKEKEFIAMEQLEERIPALLEEIHNSLFNKAKVFRDENTYSVTKFEEMKKVADEKQGFIKAMWCGELACEEKLKEEVGVSSRCMPFEQEHLANECICCGKEAKQMVYWGKAY.

Belongs to the class-II aminoacyl-tRNA synthetase family. ProS type 3 subfamily. As to quaternary structure, homodimer.

Its subcellular location is the cytoplasm. It carries out the reaction tRNA(Pro) + L-proline + ATP = L-prolyl-tRNA(Pro) + AMP + diphosphate. Catalyzes the attachment of proline to tRNA(Pro) in a two-step reaction: proline is first activated by ATP to form Pro-AMP and then transferred to the acceptor end of tRNA(Pro). In Bacillus cereus (strain ATCC 10987 / NRS 248), this protein is Proline--tRNA ligase 2.